We begin with the raw amino-acid sequence, 348 residues long: tRNA N6-adenosine threonylcarbamoyltransferase (348 aa).

H119 and H123 together coordinate Fe cation. Substrate is bound by residues 141–145, D174, G187, D191, and N280; that span reads LVSGG. D310 contributes to the Fe cation binding site.

It belongs to the KAE1 / TsaD family. It depends on Fe(2+) as a cofactor.

The protein localises to the cytoplasm. It carries out the reaction L-threonylcarbamoyladenylate + adenosine(37) in tRNA = N(6)-L-threonylcarbamoyladenosine(37) in tRNA + AMP + H(+). Its function is as follows. Required for the formation of a threonylcarbamoyl group on adenosine at position 37 (t(6)A37) in tRNAs that read codons beginning with adenine. Is involved in the transfer of the threonylcarbamoyl moiety of threonylcarbamoyl-AMP (TC-AMP) to the N6 group of A37, together with TsaE and TsaB. TsaD likely plays a direct catalytic role in this reaction. This chain is tRNA N6-adenosine threonylcarbamoyltransferase, found in Enterococcus faecalis (strain ATCC 700802 / V583).